A 703-amino-acid polypeptide reads, in one-letter code: Fibulin-1 (703 aa).

Residues 1 to 29 (MERAAPSRRVPLPLLLLGGLALLAAGVDA) form the signal peptide. Disulfide bonds link Cys-36–Cys-61, Cys-37–Cys-68, Cys-50–Cys-69, Cys-78–Cys-109, Cys-91–Cys-110, Cys-112–Cys-136, Cys-113–Cys-143, Cys-126–Cys-144, Cys-180–Cys-190, Cys-186–Cys-199, Cys-201–Cys-214, Cys-220–Cys-233, Cys-227–Cys-242, Cys-248–Cys-260, Cys-266–Cys-279, Cys-273–Cys-288, Cys-294–Cys-306, Cys-312–Cys-325, Cys-319–Cys-334, Cys-341–Cys-354, Cys-360–Cys-373, Cys-367–Cys-382, Cys-384–Cys-397, Cys-403–Cys-415, Cys-411–Cys-424, Cys-426–Cys-439, Cys-445–Cys-454, Cys-450–Cys-463, Cys-465–Cys-479, Cys-485–Cys-498, Cys-494–Cys-507, Cys-509–Cys-523, Cys-529–Cys-542, Cys-536–Cys-551, and Cys-556–Cys-577. Anaphylatoxin-like domains lie at 36 to 76 (CCAD…LEEL), 77 to 111 (HCAT…RCCH), and 112 to 144 (CCLL…QACC). N-linked (GlcNAc...) (complex) asparagine glycosylation occurs at Asn-98. One can recognise an EGF-like 1 domain in the interval 176–215 (LNDRCRGGGPCKQQCRDTGDEVVCSCFVGYQLLSDGVSCE). Residues 216 to 261 (DVNECITGSHSCRLGESCINTVGSFRCQRDSSCGTGYELTEDNSCK) enclose the EGF-like 2; calcium-binding domain. The EGF-like 3; calcium-binding domain occupies 262 to 307 (DIDECESGIHNCLPDFICQNTLGSFRCRPKLQCKSGFIQDALGNCI). Residues 308–355 (DINECLSISAPCPIGHTCINTEGSYTCQKNVPNCGRGYHLNEEGTRCV) enclose the EGF-like 4; calcium-binding domain. The region spanning 356-398 (DVDECAPPAEPCGKGHRCVNSPGSFRCECKTGYYFDGISRMCV) is the EGF-like 5; calcium-binding domain. A self-association and FN1-binding; calcium is necessary for homotypic binding, but not for heterotypic binding region spans residues 356–440 (DVDECAPPAE…RLSVDGRSCE (85 aa)). Positions 399-440 (DVNECQRYPGRLCGHKCENTLGSYLCSCSVGFRLSVDGRSCE) constitute an EGF-like 6; calcium-binding domain. Positions 441–480 (DINECSSSPCSQECANVYGSYQCYCRRGYQLSDVDGVTCE) constitute an EGF-like 7; calcium-binding domain. The EGF-like 8; calcium-binding domain maps to 481 to 524 (DIDECALPTGGHICSYRCINIPGSFQCSCPSSGYRLAPNGRNCQ). The EGF-like 9; calcium-binding domain occupies 525–578 (DIDECVTGIHNCSINETCFNIQGGFRCLAFECPENYRRSAATLQQEKTDTVRCI). 2 N-linked (GlcNAc...) asparagine glycosylation sites follow: Asn-535 and Asn-539.

Belongs to the fibulin family. Homomultimerizes and interacts with various extracellular matrix components such as FN1, LAMA1, LAMA2, NID, ACAN, CSPG2 and type IV collagen. Also interacts with APP and FGB. Interacts with FBLN7. Interacts with CCN3. In terms of assembly, (Microbial infection) Interacts with human papillomavirus/HPV type 16, 18 and 31 proteins E6. In terms of tissue distribution, isoform A and isoform B are only expressed in placenta. Isoform C and isoform D are expressed in a variety of tissues and cultured cells.

Its subcellular location is the secreted. The protein localises to the extracellular space. The protein resides in the extracellular matrix. Its function is as follows. Incorporated into fibronectin-containing matrix fibers. May play a role in cell adhesion and migration along protein fibers within the extracellular matrix (ECM). Could be important for certain developmental processes and contribute to the supramolecular organization of ECM architecture, in particular to those of basement membranes. Has been implicated in a role in cellular transformation and tumor invasion, it appears to be a tumor suppressor. May play a role in haemostasis and thrombosis owing to its ability to bind fibrinogen and incorporate into clots. Could play a significant role in modulating the neurotrophic activities of APP, particularly soluble APP. The chain is Fibulin-1 (FBLN1) from Homo sapiens (Human).